The chain runs to 316 residues: MSFASETKKELTNLEVKDCCAKAELSALIRMNGSLSFSNRKVVLDVQTENAAIARRIYTLLKKQYDVSVELLVRKKMRLKKNNVYIVRLIENAKPILEDLKILGDNFVIARNISEDLVKKRCCKRSYMRGAFLAGGSVNNPETSSYHLEIFSLYKEHNDSLCRLMNQFHLNSKTLERKKGYITYLKEAEKITEFLNVIGAHNSLLRFEDVRIVRDMRNSVNRLVNCETANLNKTIGASLRQVENIKLIDERIGLDALPEKLREIAQLRIDYQEVTLKELGEMVSSGKISKSGINHRLRKLDEIAEQLRSGQSVSLK.

The segment at residues 275 to 309 (TLKELGEMVSSGKISKSGINHRLRKLDEIAEQLRS) is a DNA-binding region (H-T-H motif).

Belongs to the WhiA family.

Its function is as follows. Involved in cell division and chromosome segregation. In Bacillus licheniformis (strain ATCC 14580 / DSM 13 / JCM 2505 / CCUG 7422 / NBRC 12200 / NCIMB 9375 / NCTC 10341 / NRRL NRS-1264 / Gibson 46), this protein is Probable cell division protein WhiA.